Reading from the N-terminus, the 116-residue chain is Putative iron-sulfur cluster insertion protein ErpA (116 aa).

Iron-sulfur cluster-binding residues include Cys44, Cys108, and Cys110.

The protein belongs to the HesB/IscA family. In terms of assembly, homodimer. Iron-sulfur cluster serves as cofactor.

In terms of biological role, required for insertion of 4Fe-4S clusters. The chain is Putative iron-sulfur cluster insertion protein ErpA from Thiobacillus denitrificans (strain ATCC 25259 / T1).